The primary structure comprises 341 residues: Dihydroorotate dehydrogenase (quinone) (341 aa).

FMN is bound by residues 61 to 65 and Thr-85; that span reads AGLDK. Lys-65 is a binding site for substrate. 110–114 lines the substrate pocket; sequence NRMGF. The FMN site is built by Asn-138 and Asn-171. A substrate-binding site is contributed by Asn-171. Residue Ser-174 is the Nucleophile of the active site. Substrate is bound at residue Asn-176. FMN-binding residues include Lys-216 and Thr-244. 245 to 246 serves as a coordination point for substrate; sequence NT. Residues Gly-267, Gly-296, and 317–318 each bind FMN; that span reads YS.

The protein belongs to the dihydroorotate dehydrogenase family. Type 2 subfamily. As to quaternary structure, monomer. FMN serves as cofactor.

The protein resides in the cell membrane. The enzyme catalyses (S)-dihydroorotate + a quinone = orotate + a quinol. The protein operates within pyrimidine metabolism; UMP biosynthesis via de novo pathway; orotate from (S)-dihydroorotate (quinone route): step 1/1. Functionally, catalyzes the conversion of dihydroorotate to orotate with quinone as electron acceptor. This Pseudomonas putida (strain GB-1) protein is Dihydroorotate dehydrogenase (quinone).